The following is a 281-amino-acid chain: Transmembrane protein 41A-A (281 aa).

Positions 1 to 22 are cleaved as a signal peptide; the sequence is MRSLVGLVAVIVTATFYLYSLS. The disordered stretch occupies residues 32-56; the sequence is HKQSHEGETTDAKDGDEPSEMETAS. Basic and acidic residues predominate over residues 34–47; it reads QSHEGETTDAKDGD. Transmembrane regions (helical) follow at residues 84–104, 107–127, 170–190, 197–217, and 236–256; these read GYVL…AIPG, FLNI…LTCV, LFFF…FLNM, IPVT…NFIC, and WSVV…GALI.

It belongs to the TMEM41 family.

Its subcellular location is the membrane. The chain is Transmembrane protein 41A-A (tmem41aa) from Danio rerio (Zebrafish).